The sequence spans 401 residues: Acetate kinase (401 aa).

Asparagine 9 serves as a coordination point for Mg(2+). An ATP-binding site is contributed by lysine 16. Arginine 88 contacts substrate. The Proton donor/acceptor role is filled by aspartate 147. ATP is bound by residues 207–211, 282–284, and 333–337; these read HLGNG, DCR, and GIGEN. Glutamate 388 contributes to the Mg(2+) binding site.

Belongs to the acetokinase family. As to quaternary structure, homodimer. Mg(2+) serves as cofactor. Requires Mn(2+) as cofactor.

Its subcellular location is the cytoplasm. It catalyses the reaction acetate + ATP = acetyl phosphate + ADP. It participates in metabolic intermediate biosynthesis; acetyl-CoA biosynthesis; acetyl-CoA from acetate: step 1/2. Catalyzes the formation of acetyl phosphate from acetate and ATP. Can also catalyze the reverse reaction. The chain is Acetate kinase from Haemophilus influenzae (strain ATCC 51907 / DSM 11121 / KW20 / Rd).